A 297-amino-acid polypeptide reads, in one-letter code: B-lymphocyte antigen CD20 (297 aa).

At 1 to 56 (MTTPRNSVNGTFPAEPMKGPIAMQSGPKPLFRRMSSLVGPTQSFFMRESKTLGAVQ) the chain is on the cytoplasmic side. Position 36 is a phosphoserine (S36). Residues 57-78 (IMNGLFHIALGGLLMIPAGIYA) form a helical membrane-spanning segment. Positions 74-80 (AGIYAPI) are epitope 1. Topologically, residues 79–84 (PICVTV) are extracellular. A helical membrane pass occupies residues 85 to 105 (WYPLWGGIMYIISGSLLAATE). The Cytoplasmic segment spans residues 106-120 (KNSRKCLVKGKMIMN). The S-palmitoyl cysteine moiety is linked to residue C111. Residues 121–141 (SLSLFAAISGMILSIMDILNI) traverse the membrane as a helical segment. Residues 142–188 (KISHFLKMESLNFIRAHTPYINIYNCEPANPSEKNSPSTQYCYSIQS) are Extracellular-facing. The segment at 146 to 160 (FLKMESLNFIRAHTP) is epitope 2. An intrachain disulfide couples C167 to C183. Positions 168-175 (EPANPSEK) are epitope 3 (recognized by antibodies, including Rituximab). The chain crosses the membrane as a helical span at residues 189–209 (LFLGILSVMLIFAFFQELVIA). Residues 210 to 297 (GIVENEWKRT…SSPIENDSSP (88 aa)) lie on the Cytoplasmic side of the membrane. Residue C220 is the site of S-palmitoyl cysteine attachment. Position 225 is a phosphoserine (S225). T239 carries the post-translational modification Phosphothreonine. Residues 247-297 (VGLTETSSQPKNEEDIEIIPIQEEEEEETETNFPEPPQDQESSPIENDSSP) form a disordered region. Residues 260 to 276 (EDIEIIPIQEEEEEETE) are compositionally biased toward acidic residues. The span at 285-297 (DQESSPIENDSSP) shows a compositional bias: polar residues.

It belongs to the MS4A family. In terms of assembly, forms homotetramers. Interacts with the heavy and light chains of cell surface IgM, the antigen-binding components of the BCR. Post-translationally, phosphorylated on serines and threonines in resting B-cells. Protein kinase C/PKC can use CD20 as substrate. In terms of tissue distribution, expressed on B-cells.

It is found in the cell membrane. Functionally, B-lymphocyte-specific membrane protein that plays a role in the regulation of cellular calcium influx necessary for the development, differentiation, and activation of B-lymphocytes. Functions as a store-operated calcium (SOC) channel component promoting calcium influx after activation by the B-cell receptor/BCR. This is B-lymphocyte antigen CD20 (MS4A1) from Homo sapiens (Human).